The chain runs to 262 residues: Acyl-[acyl-carrier-protein]--UDP-N-acetylglucosamine O-acyltransferase (262 aa).

It belongs to the transferase hexapeptide repeat family. LpxA subfamily. As to quaternary structure, homotrimer.

Its subcellular location is the cytoplasm. It carries out the reaction a (3R)-hydroxyacyl-[ACP] + UDP-N-acetyl-alpha-D-glucosamine = a UDP-3-O-[(3R)-3-hydroxyacyl]-N-acetyl-alpha-D-glucosamine + holo-[ACP]. It functions in the pathway glycolipid biosynthesis; lipid IV(A) biosynthesis; lipid IV(A) from (3R)-3-hydroxytetradecanoyl-[acyl-carrier-protein] and UDP-N-acetyl-alpha-D-glucosamine: step 1/6. Its function is as follows. Involved in the biosynthesis of lipid A, a phosphorylated glycolipid that anchors the lipopolysaccharide to the outer membrane of the cell. This is Acyl-[acyl-carrier-protein]--UDP-N-acetylglucosamine O-acyltransferase from Yersinia enterocolitica.